We begin with the raw amino-acid sequence, 374 residues long: GPN-loop GTPase 1 (374 aa).

At A2 the chain carries N-acetylalanine. 29–34 (GSGKTT) contributes to the GTP binding site. The Gly-Pro-Asn (GPN)-loop; involved in dimer interface signature appears at 86 to 88 (GPN). 189-192 (NKTD) is a binding site for GTP. A phosphoserine mark is found at S301, S312, and S314. Residues 326-354 (RGTLDEEDEEADSDTDDIDHRVTEESHEE) form a disordered region. T328 bears the Phosphothreonine mark. Positions 330–342 (DEEDEEADSDTDD) are enriched in acidic residues. At S338 the chain carries Phosphoserine. T340 carries the phosphothreonine modification. Over residues 343–354 (IDHRVTEESHEE) the composition is skewed to basic and acidic residues.

It belongs to the GPN-loop GTPase family. Heterodimer with GPN3. Binds to RNA polymerase II (RNAPII). Interacts directly with RNAPII subunits RPB4 and RPB7 and the CTD of RPB1. Interacts with XPA. As to expression, expressed ubiquitously.

It is found in the cytoplasm. It localises to the nucleus. Small GTPase required for proper nuclear import of RNA polymerase II (RNAPII). May act at an RNAP assembly step prior to nuclear import. Forms an interface between the RNA polymerase II enzyme and chaperone/scaffolding proteins, suggesting that it is required to connect RNA polymerase II to regulators of protein complex formation. May be involved in nuclear localization of XPA. The sequence is that of GPN-loop GTPase 1 from Homo sapiens (Human).